Reading from the N-terminus, the 395-residue chain is MNYNFGGNVFDQEVGVGGEGGGGGEGSGCPWARPCDGCRAAPSVVYCRADAAYLCASCDARVHAANRVASRHERVRVCEACERAPAALACRADAAALCVACDVQVHSANPLPAITIPATSVLAEAVVATATVLGDKDEEVDSWLLLSKDSDNNNNNNNNNDNDNNDNNNSNSSNNGMYFGEVDEYFDLVGYNSYYDNRIENNQDRQYGMHEQQEQQQQQQEMQKEFAEKEGSECVVPSQITMLSEQQHSGYGVVGADQAASMTAGVSAYTDSISNSISFSSMEAGIVPDSTVIDMPNSRILTPAGAINLFSGPSLQMSLHFSSMDREARVLRYREKKKARKFEKTIRYETRKAYAEARPRIKGRFAKRSDVQIEVDQMFSTAALSDGSYGTVPWF.

Residues 30–72 form a B box-type 1; atypical zinc finger; that stretch reads PWARPCDGCRAAPSVVYCRADAAYLCASCDARVHAANRVASRH. Residues cysteine 35, cysteine 38, cysteine 58, histidine 63, cysteine 78, cysteine 81, cysteine 101, and histidine 106 each coordinate Zn(2+). The segment at 73-117 adopts a B box-type 2; atypical zinc-finger fold; the sequence is ERVRVCEACERAPAALACRADAAALCVACDVQVHSANPLPAITIP. 2 disordered regions span residues 147–176 and 208–228; these read SKDS…SNNG and GMHE…EFAE. Positions 152–175 are enriched in low complexity; the sequence is NNNNNNNNNDNDNNDNNNSNSSNN. Positions 326–368 constitute a CCT domain; it reads REARVLRYREKKKARKFEKTIRYETRKAYAEARPRIKGRFAKR.

This sequence belongs to the CONSTANS family. As to quaternary structure, interacts with HAL3 in the dark. Post-translationally, phosphorylated by OSK4 in the presence of HDR1.

Its subcellular location is the nucleus. Its function is as follows. Probable transcription factor involved in the regulation of flower development. Required for the promotion of flowering under short day (SD) conditions and the suppression of flowering under long day (LD) conditions. Positively regulates the floral activator HEADING DATE 3a (HD3A) under SD and negatively under LD conditions. The chain is Zinc finger protein HD1 from Oryza sativa subsp. japonica (Rice).